Consider the following 1013-residue polypeptide: MQATAALETDSDKNYPKNGGHFQNDKLYNPKKENMFFSNGCNGVILAFPDGKEDSLATEERASDKENSIVDQRDLSELSFSENQDSNRGNIFSQSSEFEDSNDYAFLNETYSIHYSESKLKDENLLHLYSGLHPEVHKRVEMIFDTLDNNSIGLGRSAEASGADCGDVQKSDVDEDSQQEYHSAELECISAHLAKTVSRSSLDVSELKTSSYDFKCGGNFEDNHGKLESGPSPSLESLNGFAQECSLQVSTSQSSDMLQEYHEPKYEKCKEQEVDLTYHKAFDGILQRSSSPLNHQKVPETQVYTKEVKSQTTESKDFYGNRIFQNKALQRPENATMFPQDRALETHLKANDAHQPSGPCALDDSVISLCGSSQYKSLPEPGFFSPVIPRVAVTDYQAEVEGSCLHHVQGSATNKACSLMKEVCLTSVPDAAACIAAVQQTLHVSSRVNASSSIVSASSITETKMVRQSQAEEWQSDKRSVACNTAWSCGQQCRDAQRAAPGSDSGRPLSTGCLKPSGNSLNENSLELRKVFDTTDRQKHCNRAFQLCEEKAVPSRCCQKTTERAIKAEMHLLDVCYQMCHRHCHHIYKLVMESRAGLNRNLQTDSAKKELGAALLSVLEDLKLRYMNLKGKVHKGIPLEELPPLSVESKLLSAFSDFVSRLMKDEACSLSGANSELDNQSLPDVDVSPGLLKTLSQMSFIPDSSQPEQGKSPMSDVCKNGDTDIGFNCLKLNDKECKTVQEASEDWFDATERLIGADFSETQDSTAECEEWQPRNPLELKNSELHGKGQGFLIHVGGLCPSVSEADLRSHFQKYQVSEISIYDSTNYRYASLAFAKNSNAKMAVKEMNGVKINGKSVTVRLVKIPGEYTPPPLSTTGNSTSMNHLEKNTNKDATSASSICRLPRAKSRQLESEQDSEFPPLDQGVKKNCNQMKSGQLLPETPFQFIPPNTLNLRSFTKIMKRLAELHPDISRDHIIEALQEVRINHKGFLNGLSINTIVKMASSFLRNSALK.

2 disordered regions span residues 1 to 25 (MQATAALETDSDKNYPKNGGHFQND) and 56 to 94 (LATEERASDKENSIVDQRDLSELSFSENQDSNRGNIFSQ). The span at 56-76 (LATEERASDKENSIVDQRDLS) shows a compositional bias: basic and acidic residues. Polar residues predominate over residues 78 to 94 (LSFSENQDSNRGNIFSQ). A phosphoserine mark is found at Ser365, Ser368, Ser510, Ser681, and Ser688. An RRM domain is found at 792-865 (FLIHVGGLCP…KSVTVRLVKI (74 aa)). The interval 905–925 (RAKSRQLESEQDSEFPPLDQG) is disordered.

As to quaternary structure, homodimer. Interacts with TEX14. In terms of tissue distribution, highly expressed in testis. Also expressed in other tissues at lower level.

Its subcellular location is the cytoplasm. Component of intercellular bridges during meiosis. Intercellular bridges are evolutionarily conserved structures that connect differentiating germ cells. Not required for fertility. This chain is RNA-binding protein 44 (Rbm44), found in Mus musculus (Mouse).